Here is a 214-residue protein sequence, read N- to C-terminus: External core antigen (214 aa).

An N-terminal signal peptide occupies residues 1-19; that stretch reads MQLFHLCLIISCTCPTVQA. Residues 25-27 are HBEAG; that stretch reads GWL. Residues 165–214 form a disordered region; the sequence is NAPILSTLPETTVVRRRDRGRSPRRRTPSPRRRRSQSPRRRRSQSRESQC. Residues 178 to 207 show a composition bias toward basic residues; the sequence is VRRRDRGRSPRRRTPSPRRRRSQSPRRRRS. A 1; half-length repeat occupies 186–192; that stretch reads SPRRRTP. Residues 186 to 208 are 3 X 8 AA repeats of S-P-R-R-R-R-S-Q; sequence SPRRRTPSPRRRRSQSPRRRRSQ. Residues 186-214 constitute a propeptide that is removed on maturation; that stretch reads SPRRRTPSPRRRRSQSPRRRRSQSRESQC. Tandem repeats lie at residues 193–200 and 201–208.

This sequence belongs to the orthohepadnavirus precore antigen family. In terms of assembly, homodimerizes. Phosphorylated. Post-translationally, cleaved by host furin.

It is found in the secreted. It localises to the host nucleus. May regulate immune response to the intracellular capsid in acting as a T-cell tolerogen, by having an immunoregulatory effect which prevents destruction of infected cells by cytotoxic T-cells. This immune regulation may predispose to chronicity during perinatal infections and prevent severe liver injury during adult infections. In Hepatitis B virus genotype A2 (isolate Japan/11D11HCCW/1998) (HBV-A), this protein is External core antigen.